Reading from the N-terminus, the 474-residue chain is Cyclin-dependent kinase 2 homolog (474 aa).

Positions Y7–L446 constitute a Protein kinase domain. Residues L13–V21 and K36 contribute to the ATP site. T17 carries the phosphothreonine modification. Y18 carries the phosphotyrosine modification. Residue D131 is the Proton acceptor of the active site. The disordered stretch occupies residues T150–A200. At S230 the chain carries Phosphoserine. Over residues Q334–S354 the composition is skewed to low complexity. Positions Q334–A356 are disordered.

This sequence belongs to the protein kinase superfamily. CMGC Ser/Thr protein kinase family. CDC2/CDKX subfamily. In terms of assembly, may form a complex composed of at least the catalytic subunit CRK2 and a cyclin. Mg(2+) serves as cofactor.

The protein localises to the cytoplasm. It carries out the reaction L-seryl-[protein] + ATP = O-phospho-L-seryl-[protein] + ADP + H(+). The enzyme catalyses L-threonyl-[protein] + ATP = O-phospho-L-threonyl-[protein] + ADP + H(+). The catalysed reaction is [DNA-directed RNA polymerase] + ATP = phospho-[DNA-directed RNA polymerase] + ADP + H(+). Phosphorylation at Thr-17 or Tyr-18 inactivates the enzyme, while phosphorylation at Ser-230 activates it. In terms of biological role, serine/threonine-protein kinase. Involved in the control of the cell cycle. Required for entry into S-phase and mitosis. Probable component of the kinase complex that phosphorylates the repetitive C-terminus of RNA polymerase II. This is Cyclin-dependent kinase 2 homolog from Crithidia fasciculata.